A 505-amino-acid chain; its full sequence is Calcium/calmodulin-dependent protein kinase kinase 1 (505 aa).

The segment at 27–66 is disordered; that stretch reads HLEEAEEGPEPASNGVDPPPRARAASVIPGSASRPTPVRP. Phosphoserine occurs at positions 67 and 74. R78 carries the post-translational modification Asymmetric dimethylarginine. S100 is subject to Phosphoserine. T108 bears the Phosphothreonine mark. Residues 128–409 enclose the Protein kinase domain; it reads YKLQSEIGKG…VSDIKLHPWV (282 aa). Residues 134 to 142 and K157 each bind ATP; that span reads IGKGAYGVV. The segment at 167 to 189 is RP domain; that stretch reads QYGFPRRPPPRGSQAPQGGPAKQ. The active-site Proton acceptor is D275. An autoinhibitory domain region spans residues 435-440; sequence KNSVKL. The segment at 438 to 463 is calmodulin-binding; the sequence is VKLIPSWTTVILVKSMLRKRSFGNPF. Phosphoserine occurs at positions 458, 475, and 492. The disordered stretch occupies residues 460–505; that stretch reads GNPFEPQARREERSMSAPGNLLLKEGCGEGGKSPELPGVQEDEAAS.

It belongs to the protein kinase superfamily. Ser/Thr protein kinase family. As to quaternary structure, interacts with CAMK4 and calmodulin. In terms of processing, appears to be autophosphorylated. Phosphorylated at multiple sites by PRCAKA/PKA. Phosphorylation of Ser-458 is blocked upon binding to Ca(2+)/calmodulin. May be phosphorylated by CAMK1 and CAMK4. As to expression, mostly expressed in the brain with higher levels in cortex and hippocampus. Lower expression levels were detected in striatum, nucleus accumbens and cerebellum (at protein level). Abundant in forebrain, weaker in cerebellum and also detected in thymus and spleen.

It is found in the cytoplasm. The protein resides in the nucleus. The enzyme catalyses L-seryl-[protein] + ATP = O-phospho-L-seryl-[protein] + ADP + H(+). It catalyses the reaction L-threonyl-[protein] + ATP = O-phospho-L-threonyl-[protein] + ADP + H(+). Activated by Ca(2+)/calmodulin. Binding of calmodulin may relieve intrasteric autoinhibition. Partially inhibited upon phosphorylation by PRCAKA/PKA. May be regulated through phosphorylation by CAMK1 and CAMK4. Calcium/calmodulin-dependent protein kinase that belongs to a proposed calcium-triggered signaling cascade involved in a number of cellular processes. Phosphorylates CAMK1, CAMK1D, CAMK1G and CAMK4. Involved in regulating cell apoptosis. Promotes cell survival by phosphorylating AKT1/PKB that inhibits pro-apoptotic BAD/Bcl2-antagonist of cell death. The chain is Calcium/calmodulin-dependent protein kinase kinase 1 (Camkk1) from Rattus norvegicus (Rat).